The sequence spans 280 residues: Probable cell division protein WhiA (280 aa).

Positions 246–279 (SLEQIAQFFERKYKVQITRSGIQHLNAKLKKLNQ) form a DNA-binding region, H-T-H motif.

This sequence belongs to the WhiA family.

In terms of biological role, involved in cell division and chromosome segregation. The sequence is that of Probable cell division protein WhiA from Mycoplasma pneumoniae (strain ATCC 29342 / M129 / Subtype 1) (Mycoplasmoides pneumoniae).